The sequence spans 245 residues: Complement C1q subcomponent subunit C (245 aa).

The first 28 residues, 1–28 (MDVGPSSLPHLGLKLLLLLLLLPLRGQA), serve as a signal peptide directing secretion. One can recognise a Collagen-like domain in the interval 31–112 (GCYGIPGMPG…GIPGEPGEEG (82 aa)). Residues P36, P39, P42, P45, P54, and P63 each carry the 4-hydroxyproline modification. Residues 45–113 (PGKDGYDGLP…IPGEPGEEGR (69 aa)) form a disordered region. Residues 54 to 71 (PGPKGEPGIPAIPGIRGP) are compositionally biased toward low complexity. K75 bears the 5-hydroxylysine mark. An O-linked (Gal...) hydroxylysine glycan is attached at K75. 4-hydroxyproline occurs at positions 81, 93, 96, 99, and 105. Residues 90 to 99 (MGPPGMPGVP) are compositionally biased toward pro residues. The C1q domain maps to 115 to 245 (KQKFQSVFTV…VFSGFLLFPD (131 aa)). The cysteines at positions 179 and 193 are disulfide-linked.

As to quaternary structure, core component of the complement C1 complex, a calcium-dependent complex composed of 1 molecule of the C1Q subcomplex, 2 molecules of C1R and 2 molecules of C1S. The C1Q subcomplex is composed 18 subunits: 3 chains of C1QA, C1QB, and C1QC trimerize to form 6 collagen-like triple helices connected to six globular ligand-recognition modules (C1q domain). O-linked glycans consist of Glc-Gal disaccharides bound to the oxygen atom of post-translationally added hydroxyl groups.

The protein resides in the secreted. It is found in the cell surface. With respect to regulation, the C1Q subcomplex is inhibited by sulfated molecules, such as triterpenoid sulfates, heparan sulfate, or chondroitin sulfates. Its function is as follows. Core component of the complement C1 complex, a multiprotein complex that initiates the classical pathway of the complement system, a cascade of proteins that leads to phagocytosis and breakdown of pathogens and signaling that strengthens the adaptive immune system. The classical complement pathway is initiated by the C1Q subcomplex of the C1 complex, which specifically binds IgG or IgM immunoglobulins complexed with antigens, forming antigen-antibody complexes on the surface of pathogens: C1QA, together with C1QB and C1QC, specifically recognizes and binds the Fc regions of IgG or IgM via its C1q domain. Immunoglobulin-binding activates the proenzyme C1R, which cleaves C1S, initiating the proteolytic cascade of the complement system. The C1Q subcomplex is activated by a hexamer of IgG complexed with antigens, while it is activated by a pentameric IgM. The C1Q subcomplex also recognizes and binds phosphatidylserine exposed on the surface of cells undergoing programmed cell death, possibly promoting activation of the complement system. The polypeptide is Complement C1q subcomponent subunit C (Homo sapiens (Human)).